The primary structure comprises 71 residues: UPF0437 protein asl1434 (71 aa).

Belongs to the UPF0437 family.

The protein is UPF0437 protein asl1434 of Nostoc sp. (strain PCC 7120 / SAG 25.82 / UTEX 2576).